The following is a 308-amino-acid chain: Ribosomal RNA large subunit methyltransferase F (308 aa).

The protein belongs to the methyltransferase superfamily. METTL16/RlmF family.

Its subcellular location is the cytoplasm. It carries out the reaction adenosine(1618) in 23S rRNA + S-adenosyl-L-methionine = N(6)-methyladenosine(1618) in 23S rRNA + S-adenosyl-L-homocysteine + H(+). Specifically methylates the adenine in position 1618 of 23S rRNA. This Shigella flexneri serotype 5b (strain 8401) protein is Ribosomal RNA large subunit methyltransferase F.